The sequence spans 494 residues: Subtilisin-like serine protease EN45_078720 (494 aa).

The first 16 residues, 1 to 16 (MKGFLSLTLLPLLVAA), serve as a signal peptide directing secretion. A propeptide spans 17–136 (SPVAVNSIHN…IEKDSEVRTM (120 aa)) (removed in mature form). The Inhibitor I9 domain occupies 43–136 (SYIVVFKKHV…IEKDSEVRTM (94 aa)). A Peptidase S8 domain is found at 146–448 (PWGLARISHR…GGSANYTKIL (303 aa)). IgE-binding stretches follow at residues 180–198 (VIDT…RANW) and 209–231 (EDGN…GVAK). Active-site charge relay system residues include D182 and H214. N-linked (GlcNAc...) asparagine glycans are attached at residues N244 and N280. S376 acts as the Charge relay system in catalysis. N443 is a glycosylation site (N-linked (GlcNAc...) asparagine). Positions 454 to 494 (KAHNAETTVEDRIGGIIDSAEKAFHKELGAIYSEIKDAVSA) are cleaved as a propeptide — removed in mature form.

This sequence belongs to the peptidase S8 family.

Serine protease. This chain is Subtilisin-like serine protease EN45_078720, found in Penicillium chrysogenum (Penicillium notatum).